The primary structure comprises 356 residues: Altered inheritance of mitochondria protein 23, mitochondrial (356 aa).

The N-terminal 32 residues, 1-32 (MLKVPLSDVLSQKMLFLKSFRYFHCTKYFSRD), are a transit peptide targeting the mitochondrion.

This sequence belongs to the AIM23 family.

The protein resides in the mitochondrion. The chain is Altered inheritance of mitochondria protein 23, mitochondrial (AIM23) from Saccharomyces cerevisiae (strain YJM789) (Baker's yeast).